Consider the following 275-residue polypeptide: 18S rRNA (guanine(1575)-N(7))-methyltransferase (275 aa).

The tract at residues 256–275 (RGRKVAKDSKFTGRKRRHRF) is disordered. Residues 257 to 264 (GRKVAKDS) carry the Nuclear localization signal motif.

Belongs to the class I-like SAM-binding methyltransferase superfamily. BUD23/WBSCR22 family. As to quaternary structure, interacts with TRM112. Interacts with ECM16.

It localises to the cytoplasm. The protein localises to the nucleus. It catalyses the reaction guanosine(1575) in yeast 18S rRNA + S-adenosyl-L-methionine = N(7)-methylguanosine(1575) in yeast 18S rRNA + S-adenosyl-L-homocysteine. In terms of biological role, S-adenosyl-L-methionine-dependent methyltransferase that specifically methylates the N(7) position of guanine 1575 (m7G1575) in 18S rRNA. Requires the methyltransferase adapter protein TRM112 for full rRNA methyltransferase activity. Important for biogenesis end export of the 40S ribosomal subunit independent on its methyltransferase activity. Required for efficient cleavage of the primary 35S precursor rRNA at site A2. Involved in positioning the proximal bud pole signal. This Saccharomyces cerevisiae (strain ATCC 204508 / S288c) (Baker's yeast) protein is 18S rRNA (guanine(1575)-N(7))-methyltransferase (BUD23).